The sequence spans 141 residues: Large ribosomal subunit protein uL11 (141 aa).

It belongs to the universal ribosomal protein uL11 family. In terms of assembly, part of the ribosomal stalk of the 50S ribosomal subunit. Interacts with L10 and the large rRNA to form the base of the stalk. L10 forms an elongated spine to which L12 dimers bind in a sequential fashion forming a multimeric L10(L12)X complex. Post-translationally, one or more lysine residues are methylated.

Its function is as follows. Forms part of the ribosomal stalk which helps the ribosome interact with GTP-bound translation factors. The sequence is that of Large ribosomal subunit protein uL11 from Phytoplasma australiense.